Reading from the N-terminus, the 513-residue chain is Zinc finger CCCH-type with G patch domain-containing protein (513 aa).

Methionine 1 carries the post-translational modification N-acetylmethionine. The interval 92 to 131 (PVAPGAELETVPSRETGPGPTEPGQEEDDGEDEEGGAALS) is disordered. Residues 115 to 126 (GQEEDDGEDEEG) are compositionally biased toward acidic residues. Residues 176–202 (KSLKPCPFFLEGKCRFQENCRFSHGQV) form a C3H1-type zinc finger. The tract at residues 267–298 (LPPLRTDPAGSSDSDGSDADDPSYARVVEPGA) is disordered. Phosphoserine is present on residues serine 278 and serine 355. The G-patch domain occupies 315 to 361 (TRGIGSRLLAKMGYEFGKGLGRRADGRVEPVHAVVLPRGKSLDQCAE). Disordered stretches follow at residues 367 to 394 (TRAG…PPPR) and 493 to 513 (QEAG…MTEF). The span at 497 to 513 (LQREQRKADTHKKMTEF) shows a compositional bias: basic and acidic residues.

Interacts with CHD4/Mi-2; the interaction is direct.

It is found in the nucleus. In terms of biological role, transcription repressor that specifically binds the 5'-GGAG[GA]A[GA]A-3' consensus sequence. Represses transcription by recruiting the chromatin multiprotein complex NuRD to target promoters. Negatively regulates expression of EGFR, a gene involved in cell proliferation, survival and migration. Its ability to repress genes of the EGFR pathway suggest it may act as a tumor suppressor. The sequence is that of Zinc finger CCCH-type with G patch domain-containing protein (ZGPAT) from Ovis aries (Sheep).